Reading from the N-terminus, the 350-residue chain is MAHLNAATLINAERSDCSLRLLENFPSLTITVRQDTSGRDLVASTYSATGMSAAARNLNPLANFRHMRQPGYLRPPHTALKPLPLRTAIMNGYESLTRHNGQIQVTPGLRELIKECAPELHESILPATVQHITPLSLATRLSMVCAGLHCDDLVETRPVTTSLTVAFTTKVLILAVDPDEAKLAVNARGADHLLTVDGASTILTNFGYDIRGNVRRDAPQALSPSDLPDCYPVLWLGAVAGLIAVQLETDLDQLGMNLTEQKTLTAHPPAVDAFMRKLQSFALLSSRLFHLCVAHALEPFRDMAALLRVWQAPTLVQIPEVSLAIKGPSIEVQGNGTQLFQVRAAPIGGM.

This sequence belongs to the aquareoviridae NS2 protein family. In terms of assembly, homomultimer.

Protein that binds to ssRNA and may be involved in genome packaging. The chain is Non-structural protein 2 (S9) from Ctenopharyngodon idella (Grass carp).